A 175-amino-acid chain; its full sequence is Disulfide bond formation protein B (175 aa).

Residues Met-1–Ser-13 lie on the Cytoplasmic side of the membrane. A helical membrane pass occupies residues Trp-14–Tyr-30. The Periplasmic segment spans residues Phe-31–Leu-48. Cys-40 and Cys-43 are disulfide-bonded. A helical membrane pass occupies residues Ala-49–Pro-64. At Lys-65–Ile-71 the chain is on the cytoplasmic side. Residues Leu-72–Leu-89 form a helical membrane-spanning segment. At Ala-90–Glu-144 the chain is on the periplasmic side. Cys-104 and Cys-130 form a disulfide bridge. Residues Trp-145–Pro-163 form a helical membrane-spanning segment. Residues Ile-164–Lys-175 lie on the Cytoplasmic side of the membrane.

This sequence belongs to the DsbB family.

The protein localises to the cell inner membrane. Functionally, required for disulfide bond formation in some periplasmic proteins. Acts by oxidizing the DsbA protein. The polypeptide is Disulfide bond formation protein B (Shewanella sp. (strain MR-4)).